The chain runs to 318 residues: L-lactate dehydrogenase (318 aa).

Val16, Asp37, and Tyr68 together coordinate NAD(+). Substrate is bound by residues Gln85, Arg91, and 123–126 (NPVD). Residues 121–123 (VAN) and Ser146 each bind NAD(+). 151-154 (DSAR) provides a ligand contact to substrate. The active-site Proton acceptor is the His178. Tyr222 carries the phosphotyrosine modification. Thr231 is a substrate binding site.

The protein belongs to the LDH/MDH superfamily. LDH family. As to quaternary structure, homotetramer.

The protein localises to the cytoplasm. It carries out the reaction (S)-lactate + NAD(+) = pyruvate + NADH + H(+). The protein operates within fermentation; pyruvate fermentation to lactate; (S)-lactate from pyruvate: step 1/1. Its function is as follows. Catalyzes the conversion of lactate to pyruvate. In Mycoplasma mobile (strain ATCC 43663 / 163K / NCTC 11711) (Mesomycoplasma mobile), this protein is L-lactate dehydrogenase.